Reading from the N-terminus, the 411-residue chain is NAD-dependent dihydropyrimidine dehydrogenase subunit PreA (411 aa).

Substrate is bound by residues asparagine 76 and 134 to 136; that span reads NFS. Cysteine 137 (nucleophile) is an active-site residue. 201–202 contributes to the substrate binding site; it reads NT. 2 4Fe-4S ferredoxin-type domains span residues 335–367 and 369–398; these read VYPR…WSEK and RTPH…LGEV. [4Fe-4S] cluster-binding residues include cysteine 344, cysteine 347, cysteine 350, cysteine 354, cysteine 378, cysteine 381, cysteine 384, and cysteine 388.

The protein belongs to the dihydropyrimidine dehydrogenase family. Heterotetramer of 2 PreA and 2 PreT subunits. Requires [4Fe-4S] cluster as cofactor.

It carries out the reaction 5,6-dihydrouracil + NAD(+) = uracil + NADH + H(+). It catalyses the reaction 5,6-dihydrothymine + NAD(+) = thymine + NADH + H(+). In terms of biological role, involved in pyrimidine base degradation. Catalyzes physiologically the reduction of uracil to 5,6-dihydrouracil (DHU) by using NADH as a specific cosubstrate. It also catalyzes the reverse reaction and the reduction of thymine to 5,6-dihydrothymine (DHT). The sequence is that of NAD-dependent dihydropyrimidine dehydrogenase subunit PreA (preA) from Escherichia coli O157:H7.